Here is a 102-residue protein sequence, read N- to C-terminus: Small ribosomal subunit protein uS10 (102 aa).

Belongs to the universal ribosomal protein uS10 family. In terms of assembly, part of the 30S ribosomal subunit.

Involved in the binding of tRNA to the ribosomes. In Chloroflexus aurantiacus (strain ATCC 29366 / DSM 635 / J-10-fl), this protein is Small ribosomal subunit protein uS10.